The primary structure comprises 140 residues: Large ribosomal subunit protein uL14 (140 aa).

Serine 17 carries the phosphoserine modification. Position 38 is a phosphotyrosine (tyrosine 38).

It belongs to the universal ribosomal protein uL14 family. As to quaternary structure, component of the large ribosomal subunit.

Its subcellular location is the cytoplasm. In terms of biological role, component of the large ribosomal subunit. The ribosome is a large ribonucleoprotein complex responsible for the synthesis of proteins in the cell. In Canis lupus familiaris (Dog), this protein is Large ribosomal subunit protein uL14 (RPL23).